The sequence spans 301 residues: GTPase Era (301 aa).

The region spanning 6-173 (KSGFVAIVGR…LEQTNANLEI (168 aa)) is the Era-type G domain. Residues 14–21 (GRPNVGKS) form a G1 region. Position 14 to 21 (14 to 21 (GRPNVGKS)) interacts with GTP. The segment at 40 to 44 (QTTRN) is G2. Residues 61–64 (DTPG) are G3. Residues 61 to 65 (DTPGI) and 123 to 126 (NKID) contribute to the GTP site. Positions 123 to 126 (NKID) are G4. The tract at residues 152-154 (ISA) is G5. The region spanning 204-282 (TREEVPHSVA…FLEIWVKVQK (79 aa)) is the KH type-2 domain.

Belongs to the TRAFAC class TrmE-Era-EngA-EngB-Septin-like GTPase superfamily. Era GTPase family. In terms of assembly, monomer.

It localises to the cytoplasm. Its subcellular location is the cell membrane. An essential GTPase that binds both GDP and GTP, with rapid nucleotide exchange. Plays a role in 16S rRNA processing and 30S ribosomal subunit biogenesis and possibly also in cell cycle regulation and energy metabolism. In Listeria innocua serovar 6a (strain ATCC BAA-680 / CLIP 11262), this protein is GTPase Era.